A 411-amino-acid polypeptide reads, in one-letter code: ATPase family AAA domain-containing protein 3C (411 aa).

177 to 184 lines the ATP pocket; that stretch reads GPPGTGKT.

Belongs to the AAA ATPase family.

This is ATPase family AAA domain-containing protein 3C (ATAD3C) from Homo sapiens (Human).